Consider the following 66-residue polypeptide: Stress-induced protein KIN1 (66 aa).

Polar residues predominate over residues 1–13; sequence MSETNKNAFQAGQ. The tract at residues 1 to 52 is disordered; the sequence is MSETNKNAFQAGQTAGKAEEKSNVLLDKAKDAAAGAGAGAQQAGKSVSDAAA. Over residues 17-31 the composition is skewed to basic and acidic residues; sequence KAEEKSNVLLDKAKD. 2 consecutive repeats follow at residues 31 to 35 and 49 to 53; these read DAAAG. The segment covering 32 to 45 has biased composition (low complexity); sequence AAAGAGAGAQQAGK.

This Arabidopsis thaliana (Mouse-ear cress) protein is Stress-induced protein KIN1 (KIN1).